A 94-amino-acid polypeptide reads, in one-letter code: Integration host factor subunit beta (94 aa).

This sequence belongs to the bacterial histone-like protein family. As to quaternary structure, heterodimer of an alpha and a beta chain.

Functionally, this protein is one of the two subunits of integration host factor, a specific DNA-binding protein that functions in genetic recombination as well as in transcriptional and translational control. The polypeptide is Integration host factor subunit beta (Chelativorans sp. (strain BNC1)).